The following is a 345-amino-acid chain: 4-hydroxy-2-oxovalerate aldolase 1 (345 aa).

Positions 9 to 261 (IRVTDTSLRD…RTGIDFFAIA (253 aa)) constitute a Pyruvate carboxyltransferase domain. Residue 17 to 18 (RD) participates in substrate binding. D18 is a binding site for Mn(2+). Catalysis depends on H21, which acts as the Proton acceptor. The substrate site is built by S171 and H200. H200 and H202 together coordinate Mn(2+). Y291 lines the substrate pocket.

It belongs to the 4-hydroxy-2-oxovalerate aldolase family.

The catalysed reaction is (S)-4-hydroxy-2-oxopentanoate = acetaldehyde + pyruvate. The sequence is that of 4-hydroxy-2-oxovalerate aldolase 1 from Nocardia farcinica (strain IFM 10152).